A 498-amino-acid chain; its full sequence is ATP synthase subunit beta, chloroplastic (498 aa).

Residue 172–179 participates in ATP binding; sequence GGAGVGKT.

The protein belongs to the ATPase alpha/beta chains family. As to quaternary structure, F-type ATPases have 2 components, CF(1) - the catalytic core - and CF(0) - the membrane proton channel. CF(1) has five subunits: alpha(3), beta(3), gamma(1), delta(1), epsilon(1). CF(0) has four main subunits: a(1), b(1), b'(1) and c(9-12).

The protein resides in the plastid. Its subcellular location is the chloroplast thylakoid membrane. The enzyme catalyses ATP + H2O + 4 H(+)(in) = ADP + phosphate + 5 H(+)(out). Functionally, produces ATP from ADP in the presence of a proton gradient across the membrane. The catalytic sites are hosted primarily by the beta subunits. In Montinia caryophyllacea (Wild clove bush), this protein is ATP synthase subunit beta, chloroplastic.